We begin with the raw amino-acid sequence, 566 residues long: Serine/threonine-protein kinase PknE (566 aa).

The Cytoplasmic portion of the chain corresponds to 1 to 337 (MDGTAESREG…PLPRSARQPW (337 aa)). Ser7 is subject to Phosphoserine; by autocatalysis. A Phosphothreonine; by autocatalysis modification is found at Thr11. The Protein kinase domain maps to 16–275 (YRLRRLVGRG…DLSAAAHAAL (260 aa)). ATP is bound by residues 22–30 (VGRGGMGDV) and Lys45. A phosphothreonine; by autocatalysis mark is found at Thr50 and Thr59. Asp139 functions as the Proton acceptor in the catalytic mechanism. Residues Thr170, Thr175, and Thr178 each carry the phosphothreonine; by autocatalysis modification. Positions 296–330 (PVPSTHPVSPGTRWPQPTPWAGGAPPWGPPSSPLP) are disordered. Residues 338 to 358 (LWVGVAVAVVVALAGGLGIAL) traverse the membrane as a helical segment. The Extracellular portion of the chain corresponds to 359-566 (AHPWRSSGPR…DPSWLARLIG (208 aa)).

Belongs to the protein kinase superfamily. Ser/Thr protein kinase family. Post-translationally, autophosphorylated on serine and threonine residues. Dephosphorylated by PstP.

The protein localises to the cell membrane. It catalyses the reaction L-seryl-[protein] + ATP = O-phospho-L-seryl-[protein] + ADP + H(+). The enzyme catalyses L-threonyl-[protein] + ATP = O-phospho-L-threonyl-[protein] + ADP + H(+). The protein is Serine/threonine-protein kinase PknE (pknE) of Mycobacterium bovis (strain ATCC BAA-935 / AF2122/97).